A 264-amino-acid chain; its full sequence is Protein OXIDATIVE STRESS 3 LIKE 1 (264 aa).

Disordered stretches follow at residues 1–76 and 178–225; these read MDCV…GPLE and TGEG…QGSF. Over residues 29-43 the composition is skewed to low complexity; the sequence is PSDSSSSPSSSASSS. The span at 47-56 shows a compositional bias: basic and acidic residues; it reads NSDDGEKSSE. A compositionally biased stretch (acidic residues) spans 57–67; sequence DGGDDAGENEV. Low complexity predominate over residues 179–201; that stretch reads GEGSSSGGDSSPGSSPTTSGSPP. Residues 203–212 are compositionally biased toward basic residues; that stretch reads QLHHHQHQMK.

It localises to the nucleus. In terms of biological role, promotes slightly the tolerance to zinc (Zn) and to oxidizing chemicals (e.g. diamide). This chain is Protein OXIDATIVE STRESS 3 LIKE 1, found in Arabidopsis thaliana (Mouse-ear cress).